Reading from the N-terminus, the 247-residue chain is Segregation and condensation protein A (247 aa).

Belongs to the ScpA family. As to quaternary structure, component of a cohesin-like complex composed of ScpA, ScpB and the Smc homodimer, in which ScpA and ScpB bind to the head domain of Smc. The presence of the three proteins is required for the association of the complex with DNA.

The protein localises to the cytoplasm. Its function is as follows. Participates in chromosomal partition during cell division. May act via the formation of a condensin-like complex containing Smc and ScpB that pull DNA away from mid-cell into both cell halves. The protein is Segregation and condensation protein A of Bacillus cereus (strain G9842).